Consider the following 113-residue polypeptide: Holo-[acyl-carrier-protein] synthase (113 aa).

Asp-8 and Glu-57 together coordinate Mg(2+).

The protein belongs to the P-Pant transferase superfamily. AcpS family. Mg(2+) is required as a cofactor.

The protein resides in the cytoplasm. The catalysed reaction is apo-[ACP] + CoA = holo-[ACP] + adenosine 3',5'-bisphosphate + H(+). Its function is as follows. Transfers the 4'-phosphopantetheine moiety from coenzyme A to a Ser of acyl-carrier-protein. This chain is Holo-[acyl-carrier-protein] synthase, found in Thermodesulfovibrio yellowstonii (strain ATCC 51303 / DSM 11347 / YP87).